The chain runs to 504 residues: Anaerobic nitric oxide reductase transcription regulator NorR (504 aa).

Asp-57 carries the post-translational modification 4-aspartylphosphate. The Sigma-54 factor interaction domain maps to 187–416; that stretch reads MIGLSPGMTQ…LEHAIHRAVV (230 aa). Residues 215–222 and 278–287 each bind ATP; these read GETGTGKE and ADNGTLFLDE. Residues 479–498 constitute a DNA-binding region (H-T-H motif); the sequence is WAACARMLETDVANLHRLAK.

It participates in nitrogen metabolism; nitric oxide reduction. Required for the expression of anaerobic nitric oxide (NO) reductase, acts as a transcriptional activator for at least the norVW operon. Activation also requires sigma-54. This chain is Anaerobic nitric oxide reductase transcription regulator NorR, found in Escherichia coli O6:K15:H31 (strain 536 / UPEC).